A 130-amino-acid chain; its full sequence is Iron-sulfur cluster insertion protein ErpA (130 aa).

Iron-sulfur cluster contacts are provided by Cys-46, Cys-116, and Cys-118.

The protein belongs to the HesB/IscA family. Homodimer. Iron-sulfur cluster is required as a cofactor.

Functionally, required for insertion of 4Fe-4S clusters for at least IspG. In Legionella pneumophila (strain Lens), this protein is Iron-sulfur cluster insertion protein ErpA.